We begin with the raw amino-acid sequence, 1229 residues long: Pesticidal crystal protein Cry1Bb (1229 aa).

The protein belongs to the delta endotoxin family.

Promotes colloidosmotic lysis by binding to the midgut epithelial cells of many lepidopteran larvae. This is Pesticidal crystal protein Cry1Bb (cry1Bb) from Bacillus thuringiensis.